The chain runs to 471 residues: Putative pentatricopeptide repeat-containing protein At1g53330 (471 aa).

10 PPR repeats span residues 46 to 81 (SLLC…RIVP), 82 to 116 (TEII…RCQR), 117 to 147 (TVKS…IDEF), 151 to 185 (DACT…KVKP), 186 to 221 (TGVT…GVRP), 222 to 256 (TVHI…KIKV), 257 to 291 (DAAI…GCKP), 292 to 326 (DTVT…GLKP), 327 to 361 (DVIS…GCSP), and 362 to 396 (DTLS…GYKP).

Belongs to the PPR family. P subfamily.

In terms of biological role, involved during embryo development. This is Putative pentatricopeptide repeat-containing protein At1g53330 from Arabidopsis thaliana (Mouse-ear cress).